Consider the following 137-residue polypeptide: MILGIGSDTIDIRRVQEVIERHGARFIDRIFTEAEQAKAERRAKAPRAWVATYAKRFAAKEACAKALGTGIRQGVWWRDMGVVNLPGGRPTMQLTGGALVRLESLLPPGHEARIDLTITDDWPTAQAFVIISALPRG.

2 residues coordinate Mg(2+): Asp8 and Glu61.

The protein belongs to the P-Pant transferase superfamily. AcpS family. The cofactor is Mg(2+).

The protein resides in the cytoplasm. It catalyses the reaction apo-[ACP] + CoA = holo-[ACP] + adenosine 3',5'-bisphosphate + H(+). Functionally, transfers the 4'-phosphopantetheine moiety from coenzyme A to a Ser of acyl-carrier-protein. This Afipia carboxidovorans (strain ATCC 49405 / DSM 1227 / KCTC 32145 / OM5) (Oligotropha carboxidovorans) protein is Holo-[acyl-carrier-protein] synthase.